A 616-amino-acid chain; its full sequence is Fatty acyl-CoA reductase 2, chloroplastic (616 aa).

A chloroplast-targeting transit peptide spans 1 to 14 (MEALFLSSSSSSIV). The NAD(P)H-binding signature appears at 133 to 143 (FLITGSTGFLA). Active-site residues include tyrosine 357 and lysine 361.

This sequence belongs to the fatty acyl-CoA reductase family. Expressed in the tapetum of anthers.

It is found in the plastid. The protein resides in the chloroplast. It catalyses the reaction a long-chain fatty acyl-CoA + 2 NADPH + 2 H(+) = a long-chain primary fatty alcohol + 2 NADP(+) + CoA. The enzyme catalyses hexadecanoyl-CoA + 2 NADPH + 2 H(+) = hexadecan-1-ol + 2 NADP(+) + CoA. It carries out the reaction hexadecanoyl-[ACP] + 2 NADPH + 2 H(+) = hexadecan-1-ol + holo-[ACP] + 2 NADP(+). Its function is as follows. Catalyzes the reduction of fatty acyl-CoA and -ACP (acyl carrier protein) substrates to fatty alcohols. Triggers the accumulation of C16 and C18 fatty alcohols; converts palmitoyl-acyl carrier protein to the corresponding C16:0 alcohol with NAD(P)H as electron donor, but seems inactive toward palmitoyl- or other acyl-coenzyme A. Also triggers the formation of some C16:0 aldehydes. Involved in the synthesis of the lipid component in sporopollenin. Required for exine patterning of pollen grain by mediating the formation of pollen wall substances. In Arabidopsis thaliana (Mouse-ear cress), this protein is Fatty acyl-CoA reductase 2, chloroplastic.